We begin with the raw amino-acid sequence, 346 residues long: Phosphoribosylformylglycinamidine cyclo-ligase (346 aa).

Belongs to the AIR synthase family.

The protein resides in the cytoplasm. The catalysed reaction is 2-formamido-N(1)-(5-O-phospho-beta-D-ribosyl)acetamidine + ATP = 5-amino-1-(5-phospho-beta-D-ribosyl)imidazole + ADP + phosphate + H(+). It participates in purine metabolism; IMP biosynthesis via de novo pathway; 5-amino-1-(5-phospho-D-ribosyl)imidazole from N(2)-formyl-N(1)-(5-phospho-D-ribosyl)glycinamide: step 2/2. The polypeptide is Phosphoribosylformylglycinamidine cyclo-ligase (Geobacillus sp. (strain WCH70)).